The chain runs to 283 residues: Pantothenate synthetase (283 aa).

30–37 (MGNLHDGH) is an ATP binding site. The Proton donor role is filled by histidine 37. Residue glutamine 61 participates in (R)-pantoate binding. Glutamine 61 is a beta-alanine binding site. An ATP-binding site is contributed by 149–152 (GEKD). Residue glutamine 155 coordinates (R)-pantoate. 186-189 (LSSR) lines the ATP pocket.

This sequence belongs to the pantothenate synthetase family. As to quaternary structure, homodimer.

It is found in the cytoplasm. It carries out the reaction (R)-pantoate + beta-alanine + ATP = (R)-pantothenate + AMP + diphosphate + H(+). It functions in the pathway cofactor biosynthesis; (R)-pantothenate biosynthesis; (R)-pantothenate from (R)-pantoate and beta-alanine: step 1/1. Functionally, catalyzes the condensation of pantoate with beta-alanine in an ATP-dependent reaction via a pantoyl-adenylate intermediate. The polypeptide is Pantothenate synthetase (Escherichia coli O6:H1 (strain CFT073 / ATCC 700928 / UPEC)).